We begin with the raw amino-acid sequence, 498 residues long: Hexokinase-1 (498 aa).

A helical transmembrane segment spans residues 4 to 24 (AAVGAAVVCTAAVCAAAAVLV). Residues 35-487 (GRVMAILKEL…SGIGAALLAA (453 aa)) enclose the Hexokinase domain. Residues 90-228 (TGDEHGLFYA…GVDMRVTALV (139 aa)) form a hexokinase small subdomain region. ADP contacts are provided by glycine 104, threonine 105, and asparagine 106. Threonine 194, lysine 195, asparagine 229, and aspartate 230 together coordinate D-glucose. Residues 229-476 (NDTVGTLAGG…ETIVIEHSND (248 aa)) are hexokinase large subdomain. Threonine 253 is an ADP binding site. Positions 256, 284, and 315 each coordinate D-glucose. Residue glycine 441 participates in ADP binding.

Belongs to the hexokinase family.

Its subcellular location is the plastid. The protein localises to the chloroplast outer membrane. It carries out the reaction a D-hexose + ATP = a D-hexose 6-phosphate + ADP + H(+). It catalyses the reaction D-fructose + ATP = D-fructose 6-phosphate + ADP + H(+). The enzyme catalyses D-glucose + ATP = D-glucose 6-phosphate + ADP + H(+). The protein operates within carbohydrate metabolism; hexose metabolism. Its pathway is carbohydrate degradation; glycolysis; D-glyceraldehyde 3-phosphate and glycerone phosphate from D-glucose: step 1/4. Functionally, fructose and glucose phosphorylating enzyme. This Spinacia oleracea (Spinach) protein is Hexokinase-1 (HXK1).